We begin with the raw amino-acid sequence, 865 residues long: DNA mismatch repair protein MutS (865 aa).

Residue 605 to 612 (GPNMAGKS) participates in ATP binding. The segment at 814 to 833 (PEPLEAYKPKGNKQPLSDEE) is disordered.

Belongs to the DNA mismatch repair MutS family.

This protein is involved in the repair of mismatches in DNA. It is possible that it carries out the mismatch recognition step. This protein has a weak ATPase activity. The polypeptide is DNA mismatch repair protein MutS (Halalkalibacterium halodurans (strain ATCC BAA-125 / DSM 18197 / FERM 7344 / JCM 9153 / C-125) (Bacillus halodurans)).